The primary structure comprises 426 residues: Glutamate-1-semialdehyde 2,1-aminomutase (426 aa).

Position 265 is an N6-(pyridoxal phosphate)lysine (K265).

It belongs to the class-III pyridoxal-phosphate-dependent aminotransferase family. HemL subfamily. Homodimer. It depends on pyridoxal 5'-phosphate as a cofactor.

It localises to the cytoplasm. The catalysed reaction is (S)-4-amino-5-oxopentanoate = 5-aminolevulinate. It participates in porphyrin-containing compound metabolism; protoporphyrin-IX biosynthesis; 5-aminolevulinate from L-glutamyl-tRNA(Glu): step 2/2. This is Glutamate-1-semialdehyde 2,1-aminomutase from Cellvibrio japonicus (strain Ueda107) (Pseudomonas fluorescens subsp. cellulosa).